Reading from the N-terminus, the 85-residue chain is U4-theraphotoxin-Hhn1u (85 aa).

Residues 1-22 (MKMTLIAILTCAAVLVLHTTAA) form the signal peptide. The propeptide occupies 23–48 (EELEAESQLMEVGMPDTELEAVDEER). 3 cysteine pairs are disulfide-bonded: cysteine 52-cysteine 66, cysteine 56-cysteine 77, and cysteine 71-cysteine 82.

This sequence belongs to the neurotoxin 12 (Hwtx-2) family. 02 (Hwtx-2) subfamily. Expressed by the venom gland.

The protein resides in the secreted. Its function is as follows. Postsynaptic neurotoxin. In Cyriopagopus hainanus (Chinese bird spider), this protein is U4-theraphotoxin-Hhn1u.